The sequence spans 92 residues: Conotoxin Mr15.3 (92 aa).

Residues 1–20 (MSTLKMMLLILLLLLPMATF) form the signal peptide. The propeptide occupies 21 to 53 (DSDGQAIPGGGIPSAVNSRVRGDEKSGRSLEKR).

The protein belongs to the conotoxin N superfamily. In terms of processing, contains 4 disulfide bonds. Expressed by the venom duct.

The protein resides in the secreted. In Conus marmoreus (Marble cone), this protein is Conotoxin Mr15.3.